We begin with the raw amino-acid sequence, 546 residues long: Chaperonin GroEL (546 aa).

ATP-binding positions include 30-33 (TLGP), Lys-51, 87-91 (DGTTT), Gly-415, 479-481 (NAA), and Asp-495. The tract at residues 527-546 (DKPAAPPMPGGMGGMGGMDF) is disordered. Gly residues predominate over residues 536–546 (GGMGGMGGMDF).

It belongs to the chaperonin (HSP60) family. Forms a cylinder of 14 subunits composed of two heptameric rings stacked back-to-back. Interacts with the co-chaperonin GroES.

The protein localises to the cytoplasm. It catalyses the reaction ATP + H2O + a folded polypeptide = ADP + phosphate + an unfolded polypeptide.. Together with its co-chaperonin GroES, plays an essential role in assisting protein folding. The GroEL-GroES system forms a nano-cage that allows encapsulation of the non-native substrate proteins and provides a physical environment optimized to promote and accelerate protein folding. The protein is Chaperonin GroEL of Bordetella petrii (strain ATCC BAA-461 / DSM 12804 / CCUG 43448).